The primary structure comprises 242 residues: ATP synthase subunit a (242 aa).

5 consecutive transmembrane segments (helical) span residues 21–41 (LSSI…AIIC), 79–99 (FHFL…LGLP), 116–136 (DATV…FYGV), 173–193 (LYGN…LVTG), and 198–218 (AWGW…SIFI).

It belongs to the ATPase A chain family. As to quaternary structure, F-type ATPases have 2 components, CF(1) - the catalytic core - and CF(0) - the membrane proton channel. CF(1) has five subunits: alpha(3), beta(3), gamma(1), delta(1), epsilon(1). CF(0) has three main subunits: a(1), b(2) and c(9-12). The alpha and beta chains form an alternating ring which encloses part of the gamma chain. CF(1) is attached to CF(0) by a central stalk formed by the gamma and epsilon chains, while a peripheral stalk is formed by the delta and b chains.

It localises to the cell membrane. Functionally, key component of the proton channel; it plays a direct role in the translocation of protons across the membrane. The polypeptide is ATP synthase subunit a (Staphylococcus saprophyticus subsp. saprophyticus (strain ATCC 15305 / DSM 20229 / NCIMB 8711 / NCTC 7292 / S-41)).